The following is an 81-amino-acid chain: Exodeoxyribonuclease 7 small subunit (81 aa).

The tract at residues 61–81 (MNDSDQEVAFETPQGGTGDAD) is disordered.

It belongs to the XseB family. As to quaternary structure, heterooligomer composed of large and small subunits.

It localises to the cytoplasm. The enzyme catalyses Exonucleolytic cleavage in either 5'- to 3'- or 3'- to 5'-direction to yield nucleoside 5'-phosphates.. In terms of biological role, bidirectionally degrades single-stranded DNA into large acid-insoluble oligonucleotides, which are then degraded further into small acid-soluble oligonucleotides. The protein is Exodeoxyribonuclease 7 small subunit of Levilactobacillus brevis (strain ATCC 367 / BCRC 12310 / CIP 105137 / JCM 1170 / LMG 11437 / NCIMB 947 / NCTC 947) (Lactobacillus brevis).